The sequence spans 406 residues: Renin (406 aa).

The signal sequence occupies residues 1–23; the sequence is MDGWRRMPRWGLLLLLWGSCTFG. Positions 24 to 66 are cleaved as a propeptide — activation peptide; sequence LPTDTTTFKRIFLKRMPSIRESLKERGVDMARLGPEWSQPMKR. The N-linked (GlcNAc...) asparagine glycan is linked to asparagine 71. The 318-residue stretch at 86–403 folds into the Peptidase A1 domain; the sequence is YYGEIGIGTP…DRRNNRIGFA (318 aa). Residue aspartate 104 is part of the active site. Cysteine 117 and cysteine 124 are oxidised to a cystine. The N-linked (GlcNAc...) asparagine glycan is linked to asparagine 141. A disulfide bridge links cysteine 283 with cysteine 287. Aspartate 292 is a catalytic residue. A disulfide bridge links cysteine 325 with cysteine 362.

It belongs to the peptidase A1 family. Interacts with ATP6AP2.

The protein localises to the secreted. It localises to the membrane. It catalyses the reaction Cleavage of Leu-|-Xaa bond in angiotensinogen to generate angiotensin I.. Its activity is regulated as follows. Interaction with ATP6AP2 results in a 5-fold increased efficiency in angiotensinogen processing. In terms of biological role, renin is a highly specific endopeptidase, whose only known function is to generate angiotensin I from angiotensinogen in the plasma, initiating a cascade of reactions that produce an elevation of blood pressure and increased sodium retention by the kidney. This is Renin (REN) from Homo sapiens (Human).